Here is a 309-residue protein sequence, read N- to C-terminus: Probable cell wall protein PGA50 (309 aa).

An N-terminal signal peptide occupies residues 1–17 (MKLNLLLLLFIVELVAA). Asparagine 67, asparagine 115, asparagine 248, asparagine 267, and asparagine 277 each carry an N-linked (GlcNAc...) asparagine glycan. Positions 241-281 (STTTFSSNGTSSGTTNGDTRAETKSSNSTQTSSSDKNSSQI) are disordered. Serine 286 carries the GPI-anchor amidated serine lipid modification. Residues 287-309 (TGVANFVASFGMGTLLLFVLSLC) constitute a propeptide, removed in mature form.

This sequence belongs to the IHD1 family. In terms of processing, the GPI-anchor is attached to the protein in the endoplasmic reticulum and serves to target the protein to the cell surface. There, the glucosamine-inositol phospholipid moiety is cleaved off and the GPI-modified mannoprotein is covalently attached via its lipidless GPI glycan remnant to the 1,6-beta-glucan of the outer cell wall layer.

Its subcellular location is the secreted. The protein localises to the cell wall. The protein resides in the membrane. In terms of biological role, probable GPI-anchored cell wall protein that may be involved in cell wall organization, hyphal growth, as well as in virulence. This Candida albicans (strain SC5314 / ATCC MYA-2876) (Yeast) protein is Probable cell wall protein PGA50 (PGA50).